Consider the following 418-residue polypeptide: Putative ion-transport protein YfeO (418 aa).

Helical transmembrane passes span 10 to 30 (LLLS…LIVV), 54 to 74 (DSPL…GLVI), 99 to 119 (ALPG…SLGP), 120 to 140 (EHPI…RLLP), 149 to 169 (ILAS…AALI), 186 to 206 (LFAP…FFHP), 223 to 243 (ILSG…AVWC), 258 to 278 (VLVL…GGPV), 300 to 320 (DYFL…ASGF), 322 to 342 (GGRI…LHEH), 343 to 363 (VPAV…VLVV), and 371 to 391 (LFMA…CIVM).

This sequence belongs to the chloride channel (TC 2.A.49) family.

The protein resides in the cell membrane. The protein is Putative ion-transport protein YfeO of Escherichia coli O139:H28 (strain E24377A / ETEC).